We begin with the raw amino-acid sequence, 396 residues long: Probable splicing factor YJU2B (396 aa).

The tract at residues 1-26 is disordered; that stretch reads MGERKGVNKYYPPDFNPEKHGSLNRY. Ser40 is modified (phosphoserine). A coiled-coil region spans residues 182 to 214; sequence LNSMLRRRFREKKKAIQEEEERDQALQAKASLT. The interval 295-396 is disordered; the sequence is IVRRRSRDVP…VADYSDSESE (102 aa). Ser306 carries the phosphoserine modification. Residues 315 to 327 show a composition bias toward basic and acidic residues; that stretch reads KSGEPRVPEEAAQ. Over residues 340–350 the composition is skewed to polar residues; sequence TTETPKCSSPR. Ser362 bears the Phosphoserine mark.

It belongs to the CWC16 family.

The protein resides in the nucleus. In terms of biological role, may be involved in mRNA splicing. The polypeptide is Probable splicing factor YJU2B (Homo sapiens (Human)).